We begin with the raw amino-acid sequence, 479 residues long: Ubiquinone biosynthesis monooxygenase COQ6, mitochondrial (479 aa).

Residues methionine 1–leucine 17 constitute a mitochondrion transit peptide.

This sequence belongs to the UbiH/COQ6 family. In terms of assembly, component of a multi-subunit COQ enzyme complex, composed of at least COQ3, COQ4, COQ5, COQ6, COQ7 and COQ9. FAD serves as cofactor.

It localises to the mitochondrion inner membrane. It carries out the reaction 4-hydroxy-3-(all-trans-hexaprenyl)benzoate + 2 reduced [2Fe-2S]-[ferredoxin] + O2 + 2 H(+) = 3,4-dihydroxy-5-(all-trans-hexaprenyl)benzoate + 2 oxidized [2Fe-2S]-[ferredoxin] + H2O. The enzyme catalyses 2-methoxy-6-(all-trans-hexaprenyl)phenol + 2 reduced [2Fe-2S]-[ferredoxin] + O2 + 2 H(+) = 2-methoxy-6-(all-trans-hexaprenyl)benzene-1,4-diol + 2 oxidized [2Fe-2S]-[ferredoxin] + H2O. The catalysed reaction is 4-amino-3-(all-trans-hexaprenyl)benzoate + 2 reduced [2Fe-2S]-[ferredoxin] + O2 + 2 H(+) = 4-amino-5-hydroxy-3-(all-trans-hexaprenyl)benzoate + 2 oxidized [2Fe-2S]-[ferredoxin] + H2O. It catalyses the reaction 4-amino-5-hydroxy-3-(all-trans-hexaprenyl)benzoate + 4 reduced [2Fe-2S]-[ferredoxin] + O2 + 5 H(+) = 3,4-dihydroxy-5-(all-trans-hexaprenyl)benzoate + 4 oxidized [2Fe-2S]-[ferredoxin] + NH4(+) + H2O. Its pathway is cofactor biosynthesis; ubiquinone biosynthesis. Its function is as follows. FAD-dependent monooxygenase required for two non-consecutive steps during ubiquinone biosynthesis. Required for the C5-ring hydroxylation during ubiquinone biosynthesis by catalyzing the hydroxylation of 4-hydroxy-3-(all-trans-hexaprenyl)benzoic acid to 3,4-dihydroxy-5-(all-trans-hexaprenyl)benzoic acid. Also acts downstream of COQ4, for the C1-hydroxylation during ubiquinone biosynthesis by catalyzing the hydroxylation of 2-methoxy-6-(all-trans-hexaprenyl)phenol to 2-methoxy-6-(all-trans-hexaprenyl)benzene-1,4-diol. The electrons required for the hydroxylation reaction are funneled indirectly from NADPH via ferredoxin (YAH1) and ferredoxin reductase (ARH1) to COQ6. Can also convert 3-hexaprenyl-4-aminobenzoic acid (HAB), a COQ2-prenylated pABA, to DHHB in a two step process. HAB is first hydroxylated at C5 to yield 3-hexaprenyl-4-amino-5-hydroxybenzoic acid (HHAB) which is further deaminated at C4 by COQ6 to produce DHHB. In Saccharomyces cerevisiae (strain ATCC 204508 / S288c) (Baker's yeast), this protein is Ubiquinone biosynthesis monooxygenase COQ6, mitochondrial.